Consider the following 418-residue polypeptide: MSYQKQQKPTLTGQRFKTRKRDEKERFDPSQFQESIVQGLNQTGTDLEAVAKFLDSSGAKLDYRRYAETLFDILVAGGMLAPGGALSDDMTRTKYCVFTAQEDIKTMKAYAQVFNKLIRRYKYLEKGFEEEIKKLLLFLKGFSESERNKLAMLTGVLLGNGSLSAAILSSLFNDNLVKEGVSPAFAVKLFKSWISEKDINSVAGSLRKVSMDNRLMELFPVNKRSYEHFSRYFTGAGLKEISDFARNQQSLGARKELQKELQEQISLGVSFKEIIDYCKEEMKRSSISEQLMIGIMWTSLMSDMEWNKKEELVTEQAIKHLKQHSPLLKAFSTQAQSELSLLQRIQEFCYDNIHFMKTFQKMVLLLYKVDVLSEEAVLKWFTEAHLAKGKSVFLEQMKTFVEWLKNAEEESESEEESD.

The span at 1–15 (MSYQKQQKPTLTGQR) shows a compositional bias: polar residues. Positions 1-29 (MSYQKQQKPTLTGQRFKTRKRDEKERFDP) are disordered. Residues 247–414 (NQQSLGARKE…KNAEEESESE (168 aa)) form the W2 domain.

It belongs to the BZW family.

Functionally, translation initiation regulator which may repress repeat-associated non-AUG (RAN) initiated translation probably by acting as a competitive inhibitor of eukaryotic translation initiation factor 5 (EIF5) function. Enhances histone H4 gene transcription but does not seem to bind DNA directly. This Danio rerio (Zebrafish) protein is eIF5-mimic protein 2-B (bzw1b).